The primary structure comprises 95 residues: MSVDETTVRRIAHLARIAVADEDVGPLQGELNAILAFVEQLGAVDVEGVEPMTSVTPMRMKKRADVVNDGGRASDIVANAPETEDNYFLVPKVVE.

This sequence belongs to the GatC family. Heterotrimer of A, B and C subunits.

The catalysed reaction is L-glutamyl-tRNA(Gln) + L-glutamine + ATP + H2O = L-glutaminyl-tRNA(Gln) + L-glutamate + ADP + phosphate + H(+). The enzyme catalyses L-aspartyl-tRNA(Asn) + L-glutamine + ATP + H2O = L-asparaginyl-tRNA(Asn) + L-glutamate + ADP + phosphate + 2 H(+). Its function is as follows. Allows the formation of correctly charged Asn-tRNA(Asn) or Gln-tRNA(Gln) through the transamidation of misacylated Asp-tRNA(Asn) or Glu-tRNA(Gln) in organisms which lack either or both of asparaginyl-tRNA or glutaminyl-tRNA synthetases. The reaction takes place in the presence of glutamine and ATP through an activated phospho-Asp-tRNA(Asn) or phospho-Glu-tRNA(Gln). The chain is Aspartyl/glutamyl-tRNA(Asn/Gln) amidotransferase subunit C from Methylorubrum populi (strain ATCC BAA-705 / NCIMB 13946 / BJ001) (Methylobacterium populi).